Reading from the N-terminus, the 313-residue chain is MGNELRHRTVLLDEAVESLVTRPDGVYVDGTFGRGGHSRAVLARLASAGRLIAFDKDPRAIETAQGIEDARFSIVHDSFASMRDALAARGVEKVSGVLLDLGVSSPQVDDPARGFSFRADGPLDMRMDPTRGESAAEWLARASVQELTEVIRDYGEERFAFQIAKALVARRAESDRLGPLDTTGELAQIVGHVVKTREKGKDPATRTFQAIRIHVNQELADLQVVLDAALSLLEQGGRLVVISFHSLEDRIVKRFMQAHASAPAVDRRLPIRAVDLPSPPLKIISRQFPSEAEVAANPRARSAVMRIAERVTP.

S-adenosyl-L-methionine-binding positions include 35–37 (GGH), Asp55, Phe79, Asp100, and Gln107.

Belongs to the methyltransferase superfamily. RsmH family.

The protein resides in the cytoplasm. It carries out the reaction cytidine(1402) in 16S rRNA + S-adenosyl-L-methionine = N(4)-methylcytidine(1402) in 16S rRNA + S-adenosyl-L-homocysteine + H(+). Functionally, specifically methylates the N4 position of cytidine in position 1402 (C1402) of 16S rRNA. In Burkholderia orbicola (strain MC0-3), this protein is Ribosomal RNA small subunit methyltransferase H.